The chain runs to 329 residues: Malate dehydrogenase (329 aa).

Residue 12 to 18 (GAAGQIG) coordinates NAD(+). Substrate-binding residues include arginine 93 and arginine 99. Residues asparagine 106, glutamine 113, and 130 to 132 (TGN) each bind NAD(+). Residues asparagine 132 and arginine 163 each contribute to the substrate site. Histidine 188 acts as the Proton acceptor in catalysis.

This sequence belongs to the LDH/MDH superfamily. MDH type 2 family.

It carries out the reaction (S)-malate + NAD(+) = oxaloacetate + NADH + H(+). In terms of biological role, catalyzes the reversible oxidation of malate to oxaloacetate. The protein is Malate dehydrogenase of Mycobacterium avium (strain 104).